The primary structure comprises 229 residues: ATP-dependent dethiobiotin synthetase BioD (229 aa).

12–17 (GVGKTV) serves as a coordination point for ATP. Mg(2+) is bound at residue Thr-16. Lys-37 is an active-site residue. Thr-41 serves as a coordination point for substrate. ATP is bound by residues Asp-53, 112 to 115 (EGAG), and 201 to 203 (PAG). Residues Asp-53 and Glu-112 each coordinate Mg(2+).

It belongs to the dethiobiotin synthetase family. As to quaternary structure, homodimer. Requires Mg(2+) as cofactor.

Its subcellular location is the cytoplasm. The enzyme catalyses (7R,8S)-7,8-diammoniononanoate + CO2 + ATP = (4R,5S)-dethiobiotin + ADP + phosphate + 3 H(+). Its pathway is cofactor biosynthesis; biotin biosynthesis; biotin from 7,8-diaminononanoate: step 1/2. Functionally, catalyzes a mechanistically unusual reaction, the ATP-dependent insertion of CO2 between the N7 and N8 nitrogen atoms of 7,8-diaminopelargonic acid (DAPA, also called 7,8-diammoniononanoate) to form a ureido ring. The chain is ATP-dependent dethiobiotin synthetase BioD from Mycobacterium sp. (strain JLS).